Here is a 329-residue protein sequence, read N- to C-terminus: Ketol-acid reductoisomerase (NADP(+)) (329 aa).

The 181-residue stretch at 2–182 (TQLFYDTDAD…GGTRAGILET (181 aa)) folds into the KARI N-terminal Rossmann domain. NADP(+)-binding positions include 25–28 (YGSQ), Ser-51, Ser-53, and 83–86 (DEFQ). His-108 is a catalytic residue. Residue Gly-134 coordinates NADP(+). Residues 183–328 (NFKEETETDL…KGLRAMFSWL (146 aa)) enclose the KARI C-terminal knotted domain. Asp-191, Glu-195, Glu-227, and Glu-231 together coordinate Mg(2+). Ser-252 is a binding site for substrate.

It belongs to the ketol-acid reductoisomerase family. The cofactor is Mg(2+).

The catalysed reaction is (2R)-2,3-dihydroxy-3-methylbutanoate + NADP(+) = (2S)-2-acetolactate + NADPH + H(+). It catalyses the reaction (2R,3R)-2,3-dihydroxy-3-methylpentanoate + NADP(+) = (S)-2-ethyl-2-hydroxy-3-oxobutanoate + NADPH + H(+). The protein operates within amino-acid biosynthesis; L-isoleucine biosynthesis; L-isoleucine from 2-oxobutanoate: step 2/4. It participates in amino-acid biosynthesis; L-valine biosynthesis; L-valine from pyruvate: step 2/4. Its function is as follows. Involved in the biosynthesis of branched-chain amino acids (BCAA). Catalyzes an alkyl-migration followed by a ketol-acid reduction of (S)-2-acetolactate (S2AL) to yield (R)-2,3-dihydroxy-isovalerate. In the isomerase reaction, S2AL is rearranged via a Mg-dependent methyl migration to produce 3-hydroxy-3-methyl-2-ketobutyrate (HMKB). In the reductase reaction, this 2-ketoacid undergoes a metal-dependent reduction by NADPH to yield (R)-2,3-dihydroxy-isovalerate. The polypeptide is Ketol-acid reductoisomerase (NADP(+)) (Prochlorococcus marinus (strain MIT 9515)).